The following is a 143-amino-acid chain: Nucleoside diphosphate kinase (143 aa).

ATP contacts are provided by K11, F59, R87, T93, R104, and N114. H117 functions as the Pros-phosphohistidine intermediate in the catalytic mechanism.

The protein belongs to the NDK family. As to quaternary structure, homotetramer. It depends on Mg(2+) as a cofactor.

It localises to the cytoplasm. The enzyme catalyses a 2'-deoxyribonucleoside 5'-diphosphate + ATP = a 2'-deoxyribonucleoside 5'-triphosphate + ADP. It catalyses the reaction a ribonucleoside 5'-diphosphate + ATP = a ribonucleoside 5'-triphosphate + ADP. In terms of biological role, major role in the synthesis of nucleoside triphosphates other than ATP. The ATP gamma phosphate is transferred to the NDP beta phosphate via a ping-pong mechanism, using a phosphorylated active-site intermediate. The chain is Nucleoside diphosphate kinase from Klebsiella pneumoniae (strain 342).